We begin with the raw amino-acid sequence, 1556 residues long: Pentafunctional AROM polypeptide (1556 aa).

The 3-dehydroquinate synthase stretch occupies residues 1–387 (MFAEGQIQKV…HEQKASSVAD (387 aa)). Residues 46-48 (DTN), 84-87 (ETSK), 115-117 (GGV), and aspartate 120 contribute to the NAD(+) site. Arginine 131 serves as a coordination point for 7-phospho-2-dehydro-3-deoxy-D-arabino-heptonate. 140–141 (TT) is a binding site for NAD(+). 2 residues coordinate 7-phospho-2-dehydro-3-deoxy-D-arabino-heptonate: aspartate 147 and lysine 153. NAD(+) is bound at residue lysine 162. Asparagine 163 serves as a coordination point for 7-phospho-2-dehydro-3-deoxy-D-arabino-heptonate. Residues 180–183 (FLET) and asparagine 191 each bind NAD(+). Residue glutamate 195 participates in Zn(2+) binding. 7-phospho-2-dehydro-3-deoxy-D-arabino-heptonate-binding positions include 195-198 (EVIK) and lysine 253. Residue glutamate 263 is the Proton acceptor; for 3-dehydroquinate synthase activity of the active site. Residues 267–271 (RNLLN) and histidine 274 contribute to the 7-phospho-2-dehydro-3-deoxy-D-arabino-heptonate site. Histidine 274 is a binding site for Zn(2+). Histidine 278 acts as the Proton acceptor; for 3-dehydroquinate synthase activity in catalysis. The 7-phospho-2-dehydro-3-deoxy-D-arabino-heptonate site is built by histidine 290 and lysine 359. Histidine 290 is a Zn(2+) binding site. The interval 400–837 (VGEAPVGDKK…WDVLSGVFNV (438 aa)) is EPSP synthase. The active-site For EPSP synthase activity is the cysteine 819. Positions 858-1049 (PSIFIVGMRG…HKDQFTSFLS (192 aa)) are shikimate kinase. 864–871 (GMRGAGKT) is a binding site for ATP. The segment at 1050 to 1266 (LTFPDVSIAA…AAPGQLSVEE (217 aa)) is 3-dehydroquinase. The active-site Proton acceptor; for 3-dehydroquinate dehydratase activity is the histidine 1171. The Schiff-base intermediate with substrate; for 3-dehydroquinate dehydratase activity role is filled by lysine 1200. The segment at 1279 to 1556 (KNLSFFIVGT…EVGEKAVLGN (278 aa)) is shikimate dehydrogenase.

In the N-terminal section; belongs to the sugar phosphate cyclases superfamily. Dehydroquinate synthase family. The protein in the 2nd section; belongs to the EPSP synthase family. It in the 3rd section; belongs to the shikimate kinase family. This sequence in the 4th section; belongs to the type-I 3-dehydroquinase family. In the C-terminal section; belongs to the shikimate dehydrogenase family. As to quaternary structure, homodimer. It depends on Zn(2+) as a cofactor.

Its subcellular location is the cytoplasm. It catalyses the reaction 7-phospho-2-dehydro-3-deoxy-D-arabino-heptonate = 3-dehydroquinate + phosphate. The enzyme catalyses 3-dehydroquinate = 3-dehydroshikimate + H2O. It carries out the reaction shikimate + NADP(+) = 3-dehydroshikimate + NADPH + H(+). The catalysed reaction is shikimate + ATP = 3-phosphoshikimate + ADP + H(+). It catalyses the reaction 3-phosphoshikimate + phosphoenolpyruvate = 5-O-(1-carboxyvinyl)-3-phosphoshikimate + phosphate. The protein operates within metabolic intermediate biosynthesis; chorismate biosynthesis; chorismate from D-erythrose 4-phosphate and phosphoenolpyruvate: step 2/7. It participates in metabolic intermediate biosynthesis; chorismate biosynthesis; chorismate from D-erythrose 4-phosphate and phosphoenolpyruvate: step 3/7. It functions in the pathway metabolic intermediate biosynthesis; chorismate biosynthesis; chorismate from D-erythrose 4-phosphate and phosphoenolpyruvate: step 4/7. Its pathway is metabolic intermediate biosynthesis; chorismate biosynthesis; chorismate from D-erythrose 4-phosphate and phosphoenolpyruvate: step 5/7. The protein operates within metabolic intermediate biosynthesis; chorismate biosynthesis; chorismate from D-erythrose 4-phosphate and phosphoenolpyruvate: step 6/7. The AROM polypeptide catalyzes 5 consecutive enzymatic reactions in prechorismate polyaromatic amino acid biosynthesis. This chain is Pentafunctional AROM polypeptide, found in Yarrowia lipolytica (strain CLIB 122 / E 150) (Yeast).